The chain runs to 458 residues: tRNA modification GTPase MnmE (458 aa).

(6S)-5-formyl-5,6,7,8-tetrahydrofolate contacts are provided by Arg23, Glu87, and Arg126. One can recognise a TrmE-type G domain in the interval 224–380 (GLSMVIVGKP…LKSKIKDLFF (157 aa)). A K(+)-binding site is contributed by Asn234. Residues 234 to 239 (NVGKSS), 253 to 259 (TDIAGTT), and 278 to 281 (DTAG) contribute to the GTP site. Residue Ser238 participates in Mg(2+) binding. 3 residues coordinate K(+): Thr253, Ile255, and Thr258. Residue Thr259 coordinates Mg(2+). Lys458 serves as a coordination point for (6S)-5-formyl-5,6,7,8-tetrahydrofolate.

This sequence belongs to the TRAFAC class TrmE-Era-EngA-EngB-Septin-like GTPase superfamily. TrmE GTPase family. As to quaternary structure, homodimer. Heterotetramer of two MnmE and two MnmG subunits. The cofactor is K(+).

Its subcellular location is the cytoplasm. Its function is as follows. Exhibits a very high intrinsic GTPase hydrolysis rate. Involved in the addition of a carboxymethylaminomethyl (cmnm) group at the wobble position (U34) of certain tRNAs, forming tRNA-cmnm(5)s(2)U34. This Clostridium perfringens (strain ATCC 13124 / DSM 756 / JCM 1290 / NCIMB 6125 / NCTC 8237 / Type A) protein is tRNA modification GTPase MnmE.